The following is a 160-amino-acid chain: Eosinophil cationic protein (160 aa).

An N-terminal signal peptide occupies residues Met1–Ala27. Residues Arg28–Arg72 form a required for nearly all of the bactericidal activities; partially involved in LPS-binding region. His42 acts as the Proton acceptor in catalysis. 4 disulfide bridges follow: Cys50-Cys110, Cys64-Cys123, Cys82-Cys138, and Cys89-Cys98. Tyr60 is subject to 3'-nitrotyrosine. Lys65 to Thr69 lines the substrate pocket. Asn84, Asn92, and Asn119 each carry an N-linked (GlcNAc...) asparagine glycan. His155 acts as the Proton donor in catalysis.

This sequence belongs to the pancreatic ribonuclease family. Interacts with bacterial lipopolysaccharide (LPS) and lipoteichoic acid (LTA). In vitro interacts with phospholipid bilayers.

The protein resides in the secreted. Functionally, cytotoxin and helminthotoxin with low-efficiency ribonuclease activity. Possesses a wide variety of biological activities. Exhibits antibacterial activity. The protein is Eosinophil cationic protein (RNASE3) of Gorilla gorilla gorilla (Western lowland gorilla).